The chain runs to 401 residues: Probable 2,3-bisphosphoglycerate-independent phosphoglycerate mutase (401 aa).

This sequence belongs to the BPG-independent phosphoglycerate mutase family. A-PGAM subfamily.

The enzyme catalyses (2R)-2-phosphoglycerate = (2R)-3-phosphoglycerate. Its pathway is carbohydrate degradation; glycolysis; pyruvate from D-glyceraldehyde 3-phosphate: step 3/5. Functionally, catalyzes the interconversion of 2-phosphoglycerate and 3-phosphoglycerate. In Thermotoga maritima (strain ATCC 43589 / DSM 3109 / JCM 10099 / NBRC 100826 / MSB8), this protein is Probable 2,3-bisphosphoglycerate-independent phosphoglycerate mutase.